Reading from the N-terminus, the 471-residue chain is Glutamyl-tRNA(Gln) amidotransferase subunit A, mitochondrial (471 aa).

Catalysis depends on charge relay system residues Lys-64 and Ser-141. The Acyl-ester intermediate role is filled by Ser-165.

It belongs to the amidase family. GatA subfamily. In terms of assembly, subunit of the heterotrimeric GatCAB amidotransferase (AdT) complex, composed of A, B and C subunits.

Its subcellular location is the mitochondrion. It carries out the reaction L-glutamyl-tRNA(Gln) + L-glutamine + ATP + H2O = L-glutaminyl-tRNA(Gln) + L-glutamate + ADP + phosphate + H(+). Functionally, allows the formation of correctly charged Gln-tRNA(Gln) through the transamidation of misacylated Glu-tRNA(Gln) in the mitochondria. The reaction takes place in the presence of glutamine and ATP through an activated gamma-phospho-Glu-tRNA(Gln). The sequence is that of Glutamyl-tRNA(Gln) amidotransferase subunit A, mitochondrial from Schizosaccharomyces pombe (strain 972 / ATCC 24843) (Fission yeast).